Here is a 551-residue protein sequence, read N- to C-terminus: Cation/acetate symporter ActP (551 aa).

Helical transmembrane passes span 8–28, 35–55, 78–98, 105–125, 151–171, 185–205, 208–228, 264–284, 305–325, 357–377, 406–426, 430–450, 465–485, and 496–516; these read ALAA…TGAV, WQAI…TYWA, GLAI…SALV, GLIY…LIAE, LSAC…MVGA, VAVV…GMLA, WVQI…AFMV, ISAL…PHIL, GFMG…IMLV, LFLG…VAGL, VSKI…ILFE, IAFM…PIIL, VGGW…PTIW, and FPYE…IWVF.

The protein belongs to the sodium:solute symporter (SSF) (TC 2.A.21) family.

The protein resides in the cell inner membrane. Functionally, transports acetate. This is Cation/acetate symporter ActP from Klebsiella pneumoniae (strain 342).